A 934-amino-acid chain; its full sequence is UPF0182 protein sync_1321 (934 aa).

The next 9 membrane-spanning stretches (helical) occupy residues 2 to 22 (AKII…IVII), 45 to 65 (LLLQ…CALW), 86 to 106 (GYRY…VLAI), 129 to 149 (FSTG…IMFG), 165 to 185 (VCIC…FSIP), 208 to 228 (IAFG…TALW), 251 to 271 (HGLR…MWLS), 300 to 320 (LGSI…FSSV), and 327 to 347 (LILA…FPLM).

The protein belongs to the UPF0182 family.

It localises to the cell membrane. In Synechococcus sp. (strain CC9311), this protein is UPF0182 protein sync_1321.